A 305-amino-acid polypeptide reads, in one-letter code: tRNA dimethylallyltransferase (305 aa).

11–18 (GPTAVGKT) serves as a coordination point for ATP. 13–18 (TAVGKT) contributes to the substrate binding site. Residues 36–39 (DSMQ) are interaction with substrate tRNA.

This sequence belongs to the IPP transferase family. As to quaternary structure, monomer. The cofactor is Mg(2+).

It carries out the reaction adenosine(37) in tRNA + dimethylallyl diphosphate = N(6)-dimethylallyladenosine(37) in tRNA + diphosphate. Its function is as follows. Catalyzes the transfer of a dimethylallyl group onto the adenine at position 37 in tRNAs that read codons beginning with uridine, leading to the formation of N6-(dimethylallyl)adenosine (i(6)A). The protein is tRNA dimethylallyltransferase of Listeria monocytogenes serovar 1/2a (strain ATCC BAA-679 / EGD-e).